The following is a 675-amino-acid chain: DNA ligase (675 aa).

NAD(+)-binding positions include 43 to 47 (DYEYD), 92 to 93 (SM), and E122. Residue K124 is the N6-AMP-lysine intermediate of the active site. The NAD(+) site is built by R145, E179, K295, and K319. C413, C416, C431, and C436 together coordinate Zn(2+). The region spanning 597-675 (SPDGYYKGKK…ETEAIAKFEQ (79 aa)) is the BRCT domain.

It belongs to the NAD-dependent DNA ligase family. LigA subfamily. The cofactor is Mg(2+). Mn(2+) is required as a cofactor.

The enzyme catalyses NAD(+) + (deoxyribonucleotide)n-3'-hydroxyl + 5'-phospho-(deoxyribonucleotide)m = (deoxyribonucleotide)n+m + AMP + beta-nicotinamide D-nucleotide.. Functionally, DNA ligase that catalyzes the formation of phosphodiester linkages between 5'-phosphoryl and 3'-hydroxyl groups in double-stranded DNA using NAD as a coenzyme and as the energy source for the reaction. It is essential for DNA replication and repair of damaged DNA. The protein is DNA ligase of Pediococcus pentosaceus (strain ATCC 25745 / CCUG 21536 / LMG 10740 / 183-1w).